The following is a 1105-amino-acid chain: uncharacterized protein (1105 aa).

The protein belongs to the mycobacterial PPE family.

This is an uncharacterized protein from Mycobacterium tuberculosis (strain CDC 1551 / Oshkosh).